We begin with the raw amino-acid sequence, 236 residues long: Venom metalloproteinase antarease-like TfasMP_A (236 aa).

The region spanning 4–232 is the Peptidase M12B domain; the sequence is IVVEYYIVTD…KPAASCIFEQ (229 aa). His-161 provides a ligand contact to Zn(2+). The active site involves Glu-162. Positions 165 and 171 each coordinate Zn(2+).

Belongs to the venom metalloproteinase (M12B) family. Zn(2+) is required as a cofactor. Contains several disulfide bonds. As to expression, expressed by the venom gland.

It localises to the secreted. Its activity is regulated as follows. Inhibited by EDTA. Acts as a metalloprotease. Penetrates intact tissue and specifically cleaves the vesicle-associated membrane protein 2 (VAMP2) (part of the SNARE complex) involved in pancreatic secretion, thus disrupting the normal vesicular traffic. This Tityus fasciolatus (Central Brazilian scorpion) protein is Venom metalloproteinase antarease-like TfasMP_A.